The primary structure comprises 161 residues: Regulatory protein RecX (161 aa).

This sequence belongs to the RecX family.

It localises to the cytoplasm. Its function is as follows. Modulates RecA activity. This Thermotoga petrophila (strain ATCC BAA-488 / DSM 13995 / JCM 10881 / RKU-1) protein is Regulatory protein RecX.